The chain runs to 1441 residues: Cleavage and polyadenylation specificity factor subunit 1 (1441 aa).

4 disordered regions span residues 404–435, 545–569, 713–775, and 899–921; these read PASS…GGKT, EEET…DGRR, GGAR…PAPF, and FREK…EGSG. Residues 410–419 show a composition bias toward basic and acidic residues; that stretch reads EAADKEEPPS. Serine 754 and serine 764 each carry phosphoserine. The segment covering 756-773 has biased composition (basic and acidic residues); the sequence is SKEEARRSSQPPADRDPA.

It belongs to the CPSF1 family. In terms of assembly, component of the cleavage and polyadenylation specificity factor (CPSF) complex, composed of CPSF1, CPSF2, CPSF3, CPSF4 and FIP1L1. Found in a complex with CPSF1, FIP1L1 and PAPOLA. Interacts with FIP1L1 and SRRM1. Interacts with TUT1; the interaction is direct and mediates the recruitment of the CPSF complex on the 3'UTR of selected pre-mRNAs. Interacts with TENT2/GLD2.

The protein resides in the nucleus. It is found in the nucleoplasm. Functionally, component of the cleavage and polyadenylation specificity factor (CPSF) complex that plays a key role in pre-mRNA 3'-end formation, recognizing the AAUAAA signal sequence and interacting with poly(A) polymerase and other factors to bring about cleavage and poly(A) addition. This subunit is involved in the RNA recognition step of the polyadenylation reaction. May play a role in eye morphogenesis and the development of retinal ganglion cell projections to the midbrain. This chain is Cleavage and polyadenylation specificity factor subunit 1 (Cpsf1), found in Mus musculus (Mouse).